A 55-amino-acid polypeptide reads, in one-letter code: Mannose/glucose-specific lectin alpha chain (55 aa).

This sequence belongs to the leguminous lectin family. Tetramer of two alpha and two beta chains.

This Lathyrus sativus (White vetchling) protein is Mannose/glucose-specific lectin alpha chain.